The following is an 845-amino-acid chain: Proto-oncogene vav (845 aa).

The Calponin-homology (CH) domain maps to methionine 1–proline 119. Residues lysine 194–valine 373 enclose the DH domain. In terms of domain architecture, PH spans arginine 402–serine 504. The segment at glycine 515–cysteine 564 adopts a Phorbol-ester/DAG-type zinc-finger fold. Residues leucine 592–histidine 660 enclose the SH3 1 domain. An SH2 domain is found at tryptophan 671 to phenylalanine 765. The 61-residue stretch at lysine 782–serine 842 folds into the SH3 2 domain. Tyrosine 826 and tyrosine 844 each carry phosphotyrosine.

In terms of assembly, interacts with SHB. Interacts with SH2B2, GRB2, GRB3, DOCK2, SLA, TEC and ZNF655/VIK. Interacts with SIAH2; without leading to its degradation. Associates with BLNK, PLCG1, GRB2 and NCK1 in a B-cell antigen receptor-dependent fashion. Interacts with CBLB; which inhibits tyrosine phosphorylation and down-regulates activity. May interact with CCPG1. Interacts with CLNK. Interacts with THEMIS2. Interacts with NEK3 and this interaction is prolactin-dependent. Interacts with ITK. Interacts with PTK2B/PYK2. Interacts with HCK. Interacts with PTK2B/PYK2. Interacts (via SH2 domain) with SYK. Interacts with ANKRD54. Interacts with CD6. Interacts with isoform 2 of CRACR2A. Interacts with LCP2; this interaction plays a role in TCR-mediated cytokine production. Post-translationally, phosphorylated on tyrosine residues by HCK in response to IFNG and bacterial lipopolysaccharide (LPS). Phosphorylated by FYN. In terms of tissue distribution, widely expressed in hematopoietic cells but not in other cell types.

Couples tyrosine kinase signals with the activation of the Rho/Rac GTPases, thus leading to cell differentiation and/or proliferation. This is Proto-oncogene vav (VAV1) from Homo sapiens (Human).